The primary structure comprises 325 residues: ATP phosphoribosyltransferase (325 aa).

Belongs to the ATP phosphoribosyltransferase family. Long subfamily. Mg(2+) serves as cofactor.

It is found in the cytoplasm. The catalysed reaction is 1-(5-phospho-beta-D-ribosyl)-ATP + diphosphate = 5-phospho-alpha-D-ribose 1-diphosphate + ATP. Its pathway is amino-acid biosynthesis; L-histidine biosynthesis; L-histidine from 5-phospho-alpha-D-ribose 1-diphosphate: step 1/9. Its activity is regulated as follows. Feedback inhibited by histidine. Catalyzes the condensation of ATP and 5-phosphoribose 1-diphosphate to form N'-(5'-phosphoribosyl)-ATP (PR-ATP). Has a crucial role in the pathway because the rate of histidine biosynthesis seems to be controlled primarily by regulation of HisG enzymatic activity. The chain is ATP phosphoribosyltransferase from Afipia carboxidovorans (strain ATCC 49405 / DSM 1227 / KCTC 32145 / OM5) (Oligotropha carboxidovorans).